Reading from the N-terminus, the 341-residue chain is Glycerol-3-phosphate dehydrogenase [NAD(P)+] (341 aa).

4 residues coordinate NADPH: Ser-11, Trp-12, Arg-33, and Lys-106. Residues Lys-106, Gly-137, and Ser-139 each coordinate sn-glycerol 3-phosphate. NADPH is bound at residue Ala-141. Sn-glycerol 3-phosphate is bound by residues Lys-192, Asp-245, Ser-255, Arg-256, and Asn-257. Residue Lys-192 is the Proton acceptor of the active site. Arg-256 lines the NADPH pocket. NADPH is bound by residues Val-280 and Glu-282.

This sequence belongs to the NAD-dependent glycerol-3-phosphate dehydrogenase family.

It localises to the cytoplasm. It carries out the reaction sn-glycerol 3-phosphate + NAD(+) = dihydroxyacetone phosphate + NADH + H(+). The catalysed reaction is sn-glycerol 3-phosphate + NADP(+) = dihydroxyacetone phosphate + NADPH + H(+). The protein operates within membrane lipid metabolism; glycerophospholipid metabolism. In terms of biological role, catalyzes the reduction of the glycolytic intermediate dihydroxyacetone phosphate (DHAP) to sn-glycerol 3-phosphate (G3P), the key precursor for phospholipid synthesis. In Bacillus cytotoxicus (strain DSM 22905 / CIP 110041 / 391-98 / NVH 391-98), this protein is Glycerol-3-phosphate dehydrogenase [NAD(P)+].